Consider the following 642-residue polypeptide: Threonine--tRNA ligase (642 aa).

Residues 239–530 are catalytic; it reads DHRKLGKELN…LTEHYAGAFP (292 aa). The Zn(2+) site is built by C331, H382, and H507.

Belongs to the class-II aminoacyl-tRNA synthetase family. As to quaternary structure, homodimer. Zn(2+) serves as cofactor.

It localises to the cytoplasm. It catalyses the reaction tRNA(Thr) + L-threonine + ATP = L-threonyl-tRNA(Thr) + AMP + diphosphate + H(+). Its function is as follows. Catalyzes the attachment of threonine to tRNA(Thr) in a two-step reaction: L-threonine is first activated by ATP to form Thr-AMP and then transferred to the acceptor end of tRNA(Thr). Also edits incorrectly charged L-seryl-tRNA(Thr). This is Threonine--tRNA ligase from Lawsonia intracellularis (strain PHE/MN1-00).